Consider the following 81-residue polypeptide: Beta-catenin-interacting protein 1 (81 aa).

Position 59 is a phosphoserine (serine 59).

This sequence belongs to the CTNNBIP1 family. In terms of assembly, binds CTNNB1. In terms of tissue distribution, highly expressed in heart, brain, liver and skeletal muscle. Detected at low levels in kidney, testis and lung.

The protein localises to the cytoplasm. The protein resides in the nucleus. Prevents the interaction between CTNNB1 and TCF family members, and acts as a negative regulator of the Wnt signaling pathway. This is Beta-catenin-interacting protein 1 (Ctnnbip1) from Mus musculus (Mouse).